Reading from the N-terminus, the 269-residue chain is Hydroxyethylthiazole kinase (269 aa).

Met45 contributes to the substrate binding site. Positions 121 and 167 each coordinate ATP. Gly194 provides a ligand contact to substrate.

Belongs to the Thz kinase family. It depends on Mg(2+) as a cofactor.

The catalysed reaction is 5-(2-hydroxyethyl)-4-methylthiazole + ATP = 4-methyl-5-(2-phosphooxyethyl)-thiazole + ADP + H(+). Its pathway is cofactor biosynthesis; thiamine diphosphate biosynthesis; 4-methyl-5-(2-phosphoethyl)-thiazole from 5-(2-hydroxyethyl)-4-methylthiazole: step 1/1. Catalyzes the phosphorylation of the hydroxyl group of 4-methyl-5-beta-hydroxyethylthiazole (THZ). The chain is Hydroxyethylthiazole kinase from Bacillus mycoides (strain KBAB4) (Bacillus weihenstephanensis).